Here is a 212-residue protein sequence, read N- to C-terminus: Large ribosomal subunit protein uL3 (212 aa).

Position 154 is an N5-methylglutamine (glutamine 154).

The protein belongs to the universal ribosomal protein uL3 family. As to quaternary structure, part of the 50S ribosomal subunit. Forms a cluster with proteins L14 and L19. Methylated by PrmB.

In terms of biological role, one of the primary rRNA binding proteins, it binds directly near the 3'-end of the 23S rRNA, where it nucleates assembly of the 50S subunit. The polypeptide is Large ribosomal subunit protein uL3 (Hydrogenovibrio crunogenus (strain DSM 25203 / XCL-2) (Thiomicrospira crunogena)).